A 335-amino-acid chain; its full sequence is tRNA N6-adenosine threonylcarbamoyltransferase (335 aa).

Fe cation contacts are provided by H111 and H115. Substrate is bound by residues 133-137, D166, G179, and N276; that span reads LISGG. Fe cation is bound at residue D301.

This sequence belongs to the KAE1 / TsaD family. Fe(2+) is required as a cofactor.

The protein localises to the cytoplasm. It carries out the reaction L-threonylcarbamoyladenylate + adenosine(37) in tRNA = N(6)-L-threonylcarbamoyladenosine(37) in tRNA + AMP + H(+). Required for the formation of a threonylcarbamoyl group on adenosine at position 37 (t(6)A37) in tRNAs that read codons beginning with adenine. Is involved in the transfer of the threonylcarbamoyl moiety of threonylcarbamoyl-AMP (TC-AMP) to the N6 group of A37, together with TsaE and TsaB. TsaD likely plays a direct catalytic role in this reaction. The sequence is that of tRNA N6-adenosine threonylcarbamoyltransferase from Wolbachia pipientis wMel.